Reading from the N-terminus, the 391-residue chain is Pectin acetylesterase 7 (391 aa).

Residues 1–23 (MGRLKQCWSSLLVLAVLVIGTGA) form the signal peptide. Catalysis depends on charge relay system residues Ser171, Asp267, and His334.

This sequence belongs to the pectinacetylesterase family.

It localises to the secreted. Its subcellular location is the cell wall. In terms of biological role, hydrolyzes acetyl esters in homogalacturonan regions of pectin. In type I primary cell wall, galacturonic acid residues of pectin can be acetylated at the O-2 and O-3 positions. Decreasing the degree of acetylation of pectin gels in vitro alters their physical properties. This is Pectin acetylesterase 7 from Arabidopsis thaliana (Mouse-ear cress).